A 589-amino-acid polypeptide reads, in one-letter code: GTPase LSG1-2 (589 aa).

Residues 1 to 26 (MGKSEKTSLGRSLVKHHNHMIQESKD) are disordered. Positions 158–366 (WRQLWRVLER…LCDCPGLVFP (209 aa)) constitute a CP-type G domain. A DARXP motif motif is present at residues 176 to 180 (DARDP). A G4 region spans residues 206-209 (NKAD). 206–209 (NKAD) is a GTP binding site. The segment at 237-239 (AAT) is G5. The tract at residues 315–322 (GYPNVGKS) is G1. 318-323 (NVGKSS) contacts GTP. The segment at 341–345 (GKTKH) is G2. Positions 359–362 (DCPG) are G3. Glycine 362 is a binding site for GTP. The span at 495–509 (GSESDDSAVGDETEN) shows a compositional bias: acidic residues. 2 disordered regions span residues 495-515 (GSES…VPGI) and 534-589 (SKKV…LTMR). The short motif at 534 to 541 (SKKVTAKK) is the Nuclear localization signal element. Over residues 534 to 558 (SKKVTAKKQTASHKQHKKPQRKKDR) the composition is skewed to basic residues. Residues 580 to 589 (PANTGPLTMR) show a composition bias toward polar residues.

It belongs to the TRAFAC class YlqF/YawG GTPase family. As to expression, ubiquitous, with the highest expression in reproductive and strongly dividing tissues.

Its subcellular location is the cytoplasm. The protein resides in the nucleus. Its function is as follows. GTPase involved in ribosome biogenesis. Binds to 23S rRNA and associates with 60S pre-ribosomes. Involved in early cotyledon and leaf development. This is GTPase LSG1-2 from Arabidopsis thaliana (Mouse-ear cress).